A 178-amino-acid polypeptide reads, in one-letter code: Large ribosomal subunit protein bL25 (178 aa).

It belongs to the bacterial ribosomal protein bL25 family. CTC subfamily. In terms of assembly, part of the 50S ribosomal subunit; part of the 5S rRNA/L5/L18/L25 subcomplex. Contacts the 5S rRNA. Binds to the 5S rRNA independently of L5 and L18.

Functionally, this is one of the proteins that binds to the 5S RNA in the ribosome where it forms part of the central protuberance. This chain is Large ribosomal subunit protein bL25, found in Campylobacter jejuni subsp. jejuni serotype O:23/36 (strain 81-176).